Here is a 186-residue protein sequence, read N- to C-terminus: Peptidyl-tRNA hydrolase (186 aa).

Tyr14 is a binding site for tRNA. The Proton acceptor role is filled by His19. 3 residues coordinate tRNA: Tyr64, Asn66, and Asn112.

The protein belongs to the PTH family. In terms of assembly, monomer.

The protein localises to the cytoplasm. It catalyses the reaction an N-acyl-L-alpha-aminoacyl-tRNA + H2O = an N-acyl-L-amino acid + a tRNA + H(+). Hydrolyzes ribosome-free peptidyl-tRNAs (with 1 or more amino acids incorporated), which drop off the ribosome during protein synthesis, or as a result of ribosome stalling. Its function is as follows. Catalyzes the release of premature peptidyl moieties from peptidyl-tRNA molecules trapped in stalled 50S ribosomal subunits, and thus maintains levels of free tRNAs and 50S ribosomes. This Geobacillus kaustophilus (strain HTA426) protein is Peptidyl-tRNA hydrolase.